The chain runs to 278 residues: Complement component 1 Q subcomponent-binding protein, mitochondrial (278 aa).

Residues M1–A70 constitute a mitochondrion transit peptide. The segment at T73 to E90 is C1q binding. Residues K88 and K91 each carry the N6-acetyllysine modification. Residues N133 to T162 form a disordered region. Residues F165–A209 are interaction with MAVS. Phosphotyrosine is present on Y184. Phosphoserine occurs at positions 197 and 201. The residue at position 210 (T210) is a Phosphothreonine.

Belongs to the MAM33 family. As to quaternary structure, homotrimer; three monomers form a donut-shaped structure with an unusually asymmetric charge distribution on the surface. Interacts with CDK13, HRK, VTN, NFYB, ADRA1B, FOXC1, DDX21, DDX50, NCL, SRSF1 and SRSF9. Interacts with CD93; the association may represent a cell surface C1q receptor. Interacts with KRT1; the association represents a cell surface kininogen receptor. Interacts with CD209; the interaction is indicative for a C1q:C1QBP:CD209 signaling complex. Interacts with FBL and RRP1; the respective interactions with C1QBP are competitive. Probably associates with the mitoribosome. Interacts with MAVS; the interaction occurs upon viral transfection. Interacts with PPIF. Interacts with U2AF1L4. Interacts with PLEKHN1. Interacts with VGF-derived peptide TLQP-21. Interacts with MRE11 and RAD50; forming the MRC (MRE11-RAD50-C1QBP) complex that inhibits the activity of MRE11. As to expression, ubiquitous.

The protein resides in the mitochondrion matrix. Its subcellular location is the nucleus. The protein localises to the cell membrane. It is found in the secreted. It localises to the cytoplasm. The protein resides in the nucleolus. Is believed to be a multifunctional and multicompartmental protein involved in inflammation and infection processes, ribosome biogenesis, protein synthesis in mitochondria, regulation of apoptosis, transcriptional regulation and pre-mRNA splicing. At the cell surface is thought to act as an endothelial receptor for plasma proteins of the complement and kallikrein-kinin cascades. Putative receptor for C1q; specifically binds to the globular 'heads' of C1q thus inhibiting C1; may perform the receptor function through a complex with C1qR/CD93. In complex with cytokeratin-1/KRT1 is a high affinity receptor for kininogen-1/HMWK. Can also bind other plasma proteins, such as coagulation factor XII leading to its autoactivation. May function to bind initially fluid kininogen-1 to the cell membrane. The secreted form may enhance both extrinsic and intrinsic coagulation pathways. It is postulated that the cell surface form requires docking with transmembrane proteins for downstream signaling which might be specific for a cell-type or response. By acting as C1q receptor is involved in chemotaxis of immature dendritic cells and neutrophils and is proposed to signal through CD209/DC-SIGN on immature dendritic cells, through integrin alpha-4/beta-1 during trophoblast invasion of the decidua, and through integrin beta-1 during endothelial cell adhesion and spreading. Signaling involved in inhibition of innate immune response is implicating the PI3K-AKT/PKB pathway. Required for protein synthesis in mitochondria. In mitochondrial translation may be involved in formation of functional 55S mitoribosomes; the function seems to involve its RNA-binding activity. Acts as a RNA modification reader, which specifically recognizes and binds mitochondrial RNAs modified by C5-methylcytosine (m5C) in response to stress, and promotes recruitment of the mitochondrial degradosome complex, leading to their degradation. May be involved in the nucleolar ribosome maturation process; the function may involve the exchange of FBL for RRP1 in the association with pre-ribosome particles. Involved in regulation of RNA splicing by inhibiting the RNA-binding capacity of SRSF1 and its phosphorylation. Is required for the nuclear translocation of splicing factor U2AF1L4. Involved in regulation of CDKN2A- and HRK-mediated apoptosis. May be involved in regulation of FOXC1 transcriptional activity and NFY/CCAAT-binding factor complex-mediated transcription. May play a role in antibacterial defense. Acts as a regulator of DNA repair via homologous recombination by inhibiting the activity of MRE11: interacts with unphosphorylated MRE11 and RAD50 in absence of DNA damage, preventing formation and activity of the MRN complex. Following DNA damage, dissociates from phosphorylated MRE11, allowing formation of the MRN complex. The chain is Complement component 1 Q subcomponent-binding protein, mitochondrial (C1qbp) from Mus musculus (Mouse).